A 520-amino-acid chain; its full sequence is Transactivator/viroplasmin protein (520 aa).

Disordered regions lie at residues G32–A51 and Q487–D520. Over residues S40–A51 the composition is skewed to basic and acidic residues.

It belongs to the caulimoviridae viroplasmin family.

Its subcellular location is the host cytoplasm. Functionally, enhances the ribosomal termination-reinitiation event leading to the translation of major open reading frames on the polycistronic viral RNAs. This Arabidopsis thaliana (Mouse-ear cress) protein is Transactivator/viroplasmin protein.